A 249-amino-acid polypeptide reads, in one-letter code: Tetrahydromethanopterin S-methyltransferase subunit D (249 aa).

6 helical membrane passes run 9-29 (ILWL…VHFV), 47-67 (GTVQ…GFMM), 75-95 (LILA…MIVG), 138-158 (VSFV…ALVY), 183-203 (LVGI…VIPS), and 224-244 (AVIS…IAIS).

Belongs to the MtrD family. In terms of assembly, the complex is composed of 8 subunits; MtrA, MtrB, MtrC, MtrD, MtrE, MtrF, MtrG and MtrH.

It is found in the cell membrane. The catalysed reaction is 5-methyl-5,6,7,8-tetrahydromethanopterin + coenzyme M + 2 Na(+)(in) = 5,6,7,8-tetrahydromethanopterin + methyl-coenzyme M + 2 Na(+)(out). The protein operates within one-carbon metabolism; methanogenesis from CO(2); methyl-coenzyme M from 5,10-methylene-5,6,7,8-tetrahydromethanopterin: step 2/2. In terms of biological role, part of a complex that catalyzes the formation of methyl-coenzyme M and tetrahydromethanopterin from coenzyme M and methyl-tetrahydromethanopterin. This is an energy-conserving, sodium-ion translocating step. In Methanosarcina acetivorans (strain ATCC 35395 / DSM 2834 / JCM 12185 / C2A), this protein is Tetrahydromethanopterin S-methyltransferase subunit D.